The chain runs to 843 residues: DNA gyrase subunit A (843 aa).

One can recognise a Topo IIA-type catalytic domain in the interval 61–528; that stretch reads LPDVRDGLKP…ESSTFNAEDL (468 aa). Residue Tyr-149 is the O-(5'-phospho-DNA)-tyrosine intermediate of the active site. Positions 555–561 match the GyrA-box motif; it reads QKRGGKG.

This sequence belongs to the type II topoisomerase GyrA/ParC subunit family. In terms of assembly, heterotetramer, composed of two GyrA and two GyrB chains. In the heterotetramer, GyrA contains the active site tyrosine that forms a transient covalent intermediate with DNA, while GyrB binds cofactors and catalyzes ATP hydrolysis.

The protein localises to the cytoplasm. It carries out the reaction ATP-dependent breakage, passage and rejoining of double-stranded DNA.. Functionally, a type II topoisomerase that negatively supercoils closed circular double-stranded (ds) DNA in an ATP-dependent manner to modulate DNA topology and maintain chromosomes in an underwound state. Negative supercoiling favors strand separation, and DNA replication, transcription, recombination and repair, all of which involve strand separation. Also able to catalyze the interconversion of other topological isomers of dsDNA rings, including catenanes and knotted rings. Type II topoisomerases break and join 2 DNA strands simultaneously in an ATP-dependent manner. In Leptospira biflexa serovar Patoc (strain Patoc 1 / Ames), this protein is DNA gyrase subunit A.